We begin with the raw amino-acid sequence, 443 residues long: Pentatricopeptide repeat-containing protein 6, mitochondrial (443 aa).

Residues 1 to 13 constitute a mitochondrion transit peptide; the sequence is MRILGSLPNNIRK. 2 PPR repeats span residues 130–164 and 220–254; these read NIVD…RIRP and NSTT…NENS.

It localises to the mitochondrion. Functionally, mitochondrial RNA-binding protein required for the stability of the atp9 mRNA. This chain is Pentatricopeptide repeat-containing protein 6, mitochondrial (ppr6), found in Schizosaccharomyces pombe (strain 972 / ATCC 24843) (Fission yeast).